A 453-amino-acid chain; its full sequence is MTTDTIVAQATAPGRGGVGIIRVSGPLAAHVAQTVTGRTLRPRYAEYLPFTDEDGQQLDQGIALFFPNPHSFTGEDVLELQGHGGPVVMDMLIRRILQIKGVRPARPGEFSERAFLNDKMDLTQAEAIADLIDASSEQAAKSALQSLQGEFSKRIHTLVESLIHLRIYVEAAIDFPEEEIDFLADGKVSADLQTIIDNLAAVRREANQGAIMREGMKVVIAGRPNAGKSSLLNALSGKESAIVTDIAGTTRDVLREHIHIDGMPLHIIDTAGLRDASDAVEKIGIERAWEEIRQADRVLFMVDGTTTEATDPQDIWPDFVDKLPENIGITVIRNKADQTGEPLGICHVNQPTLIRLSAKTGQGVDALRQHLKECMGFSGNQEGGFMARRRHLDALERAAEHLAIGQQQLEGYMAGEILAEELRIAQQHLNEITGEFSSDDLLGRIFSSFCIGK.

Arginine 22, glutamate 79, and lysine 119 together coordinate (6S)-5-formyl-5,6,7,8-tetrahydrofolate. The TrmE-type G domain maps to 215–376 (GMKVVIAGRP…LRQHLKECMG (162 aa)). Position 225 (asparagine 225) interacts with K(+). GTP is bound by residues 225–230 (NAGKSS), 244–250 (TDIAGTT), 269–272 (DTAG), and 334–337 (NKAD). Residue serine 229 coordinates Mg(2+). 3 residues coordinate K(+): threonine 244, isoleucine 246, and threonine 249. Threonine 250 serves as a coordination point for Mg(2+). Position 453 (lysine 453) interacts with (6S)-5-formyl-5,6,7,8-tetrahydrofolate.

Belongs to the TRAFAC class TrmE-Era-EngA-EngB-Septin-like GTPase superfamily. TrmE GTPase family. Homodimer. Heterotetramer of two MnmE and two MnmG subunits. It depends on K(+) as a cofactor.

The protein localises to the cytoplasm. In terms of biological role, exhibits a very high intrinsic GTPase hydrolysis rate. Involved in the addition of a carboxymethylaminomethyl (cmnm) group at the wobble position (U34) of certain tRNAs, forming tRNA-cmnm(5)s(2)U34. This chain is tRNA modification GTPase MnmE, found in Vibrio cholerae serotype O1 (strain ATCC 39315 / El Tor Inaba N16961).